The sequence spans 375 residues: Erythronate-4-phosphate dehydrogenase (375 aa).

Residues S45 and T67 each coordinate substrate. An NAD(+)-binding site is contributed by D147. Residue R209 is part of the active site. Residue D233 participates in NAD(+) binding. The active site involves E238. The active-site Proton donor is the H255. G258 is a binding site for NAD(+). A substrate-binding site is contributed by Y259.

It belongs to the D-isomer specific 2-hydroxyacid dehydrogenase family. PdxB subfamily. In terms of assembly, homodimer.

The protein resides in the cytoplasm. The enzyme catalyses 4-phospho-D-erythronate + NAD(+) = (R)-3-hydroxy-2-oxo-4-phosphooxybutanoate + NADH + H(+). It functions in the pathway cofactor biosynthesis; pyridoxine 5'-phosphate biosynthesis; pyridoxine 5'-phosphate from D-erythrose 4-phosphate: step 2/5. In terms of biological role, catalyzes the oxidation of erythronate-4-phosphate to 3-hydroxy-2-oxo-4-phosphonooxybutanoate. This is Erythronate-4-phosphate dehydrogenase from Shewanella amazonensis (strain ATCC BAA-1098 / SB2B).